A 414-amino-acid chain; its full sequence is Tyrosine--tRNA ligase (414 aa).

Tyrosine 38 contributes to the L-tyrosine binding site. Residues 43-52 (PTATSLHLGN) carry the 'HIGH' region motif. L-tyrosine contacts are provided by tyrosine 165 and glutamine 169. Positions 228 to 232 (KFGKS) match the 'KMSKS' region motif. Lysine 231 is an ATP binding site. One can recognise an S4 RNA-binding domain in the interval 349-414 (FNANQIIDLG…KKYFFMIELI (66 aa)).

This sequence belongs to the class-I aminoacyl-tRNA synthetase family. TyrS type 1 subfamily. In terms of assembly, homodimer.

The protein resides in the cytoplasm. It catalyses the reaction tRNA(Tyr) + L-tyrosine + ATP = L-tyrosyl-tRNA(Tyr) + AMP + diphosphate + H(+). In terms of biological role, catalyzes the attachment of tyrosine to tRNA(Tyr) in a two-step reaction: tyrosine is first activated by ATP to form Tyr-AMP and then transferred to the acceptor end of tRNA(Tyr). The polypeptide is Tyrosine--tRNA ligase (Mesomycoplasma hyopneumoniae (strain 7448) (Mycoplasma hyopneumoniae)).